Reading from the N-terminus, the 291-residue chain is Phosphate import ATP-binding protein PstB (291 aa).

The tract at residues 1 to 21 is disordered; the sequence is MANKQIIDKNDDLQAHTDRND. In terms of domain architecture, ABC transporter spans 45 to 286; sequence YSTKNLDLWY…PSDKQTEDYI (242 aa). Position 77-84 (77-84) interacts with ATP; that stretch reads GPSGCGKS.

This sequence belongs to the ABC transporter superfamily. Phosphate importer (TC 3.A.1.7) family. In terms of assembly, the complex is composed of two ATP-binding proteins (PstB), two transmembrane proteins (PstC and PstA) and a solute-binding protein (PstS).

Its subcellular location is the cell membrane. The enzyme catalyses phosphate(out) + ATP + H2O = ADP + 2 phosphate(in) + H(+). Part of the ABC transporter complex PstSACB involved in phosphate import. Responsible for energy coupling to the transport system. The sequence is that of Phosphate import ATP-binding protein PstB from Staphylococcus saprophyticus subsp. saprophyticus (strain ATCC 15305 / DSM 20229 / NCIMB 8711 / NCTC 7292 / S-41).